Consider the following 173-residue polypeptide: Photosystem I assembly protein Ycf3 (173 aa).

TPR repeat units follow at residues 35–68, 72–105, and 120–153; these read AFAY…EEDP, AFIL…NAKM, and GSIA…APNN.

It belongs to the Ycf3 family.

The protein localises to the cellular thylakoid membrane. Essential for the assembly of the photosystem I (PSI) complex. May act as a chaperone-like factor to guide the assembly of the PSI subunits. The polypeptide is Photosystem I assembly protein Ycf3 (Synechococcus sp. (strain RCC307)).